Consider the following 290-residue polypeptide: Phosphoribosylaminoimidazole-succinocarboxamide synthase (290 aa).

Belongs to the SAICAR synthetase family.

The enzyme catalyses 5-amino-1-(5-phospho-D-ribosyl)imidazole-4-carboxylate + L-aspartate + ATP = (2S)-2-[5-amino-1-(5-phospho-beta-D-ribosyl)imidazole-4-carboxamido]succinate + ADP + phosphate + 2 H(+). It participates in purine metabolism; IMP biosynthesis via de novo pathway; 5-amino-1-(5-phospho-D-ribosyl)imidazole-4-carboxamide from 5-amino-1-(5-phospho-D-ribosyl)imidazole-4-carboxylate: step 1/2. The protein is Phosphoribosylaminoimidazole-succinocarboxamide synthase of Haemophilus influenzae (strain PittGG).